The primary structure comprises 53 residues: Serine rich endogenous peptide 3 (53 aa).

A signal peptide spans 1-26 (MTKKGPLNLRLLLLLLVVLLPSCSNC). An SCOOP motif motif is present at residues 37-53 (SSEWRRKMITVWSKSSY). Residues 49-51 (SKS) carry the SxS motif essential for MIK2 binding motif.

Belongs to the serine rich endogenous peptide (SCOOP) phytocytokine family. In terms of assembly, interacts with MIK2 (via extracellular leucine-rich repeat domain); this interaction triggers the formation of complex between MIK2 and the BAK1/SERK3 and SERK4 coreceptors, and subsequent BAK1 activation by phosphorylation.

It localises to the cell membrane. The protein resides in the secreted. It is found in the extracellular space. The protein localises to the apoplast. Brassicaceae-specific phytocytokine (plant endogenous peptide released into the apoplast) perceived by MIK2 in a BAK1/SERK3 and SERK4 coreceptors-dependent manner, that modulates various physiological and antimicrobial processes including growth prevention and reactive oxygen species (ROS) response regulation. In Arabidopsis thaliana (Mouse-ear cress), this protein is Serine rich endogenous peptide 3.